Reading from the N-terminus, the 317-residue chain is tRNA pseudouridine synthase B (317 aa).

Catalysis depends on D47, which acts as the Nucleophile.

Belongs to the pseudouridine synthase TruB family. Type 1 subfamily.

The catalysed reaction is uridine(55) in tRNA = pseudouridine(55) in tRNA. Responsible for synthesis of pseudouridine from uracil-55 in the psi GC loop of transfer RNAs. The polypeptide is tRNA pseudouridine synthase B (Shewanella sp. (strain MR-7)).